Reading from the N-terminus, the 518-residue chain is Putative cysteine ligase BshC (518 aa).

Residues 404 to 474 (AAASAERLAA…RARQLTRLKR (71 aa)) are a coiled coil.

The protein belongs to the BshC family.

This chain is Putative cysteine ligase BshC, found in Deinococcus geothermalis (strain DSM 11300 / CIP 105573 / AG-3a).